A 328-amino-acid polypeptide reads, in one-letter code: Fructokinase-2 (328 aa).

The protein belongs to the carbohydrate kinase PfkB family.

The catalysed reaction is D-fructose + ATP = D-fructose 6-phosphate + ADP + H(+). It participates in glycan biosynthesis; starch biosynthesis. May play an important role in maintaining the flux of carbon towards starch formation. The polypeptide is Fructokinase-2 (FRK2) (Solanum habrochaites (Wild tomato)).